The sequence spans 496 residues: Lysine--tRNA ligase (496 aa).

The Mg(2+) site is built by Glu409 and Glu416.

The protein belongs to the class-II aminoacyl-tRNA synthetase family. In terms of assembly, homodimer. Requires Mg(2+) as cofactor.

The protein resides in the cytoplasm. The enzyme catalyses tRNA(Lys) + L-lysine + ATP = L-lysyl-tRNA(Lys) + AMP + diphosphate. This is Lysine--tRNA ligase from Streptococcus pneumoniae serotype 4 (strain ATCC BAA-334 / TIGR4).